Consider the following 180-residue polypeptide: ATP-dependent protease subunit HslV (180 aa).

Residue Thr2 is part of the active site. The Na(+) site is built by Gly158, Cys161, and Thr164.

It belongs to the peptidase T1B family. HslV subfamily. As to quaternary structure, a double ring-shaped homohexamer of HslV is capped on each side by a ring-shaped HslU homohexamer. The assembly of the HslU/HslV complex is dependent on binding of ATP.

The protein localises to the cytoplasm. It carries out the reaction ATP-dependent cleavage of peptide bonds with broad specificity.. Allosterically activated by HslU binding. Protease subunit of a proteasome-like degradation complex believed to be a general protein degrading machinery. This is ATP-dependent protease subunit HslV from Baumannia cicadellinicola subsp. Homalodisca coagulata.